The chain runs to 92 residues: Small ribosomal subunit protein bS20 (92 aa).

The interval 1-23 is disordered; it reads MANSPSAKKRAKQAEKRRSHNAS. Basic residues predominate over residues 7–20; sequence AKKRAKQAEKRRSH.

Belongs to the bacterial ribosomal protein bS20 family.

In terms of biological role, binds directly to 16S ribosomal RNA. The protein is Small ribosomal subunit protein bS20 of Pseudomonas fluorescens (strain ATCC BAA-477 / NRRL B-23932 / Pf-5).